The primary structure comprises 426 residues: D-tagatose-1,6-bisphosphate aldolase subunit KbaZ (426 aa).

This sequence belongs to the GatZ/KbaZ family. KbaZ subfamily. As to quaternary structure, forms a complex with KbaY.

The protein operates within carbohydrate metabolism; D-tagatose 6-phosphate degradation; D-glyceraldehyde 3-phosphate and glycerone phosphate from D-tagatose 6-phosphate: step 2/2. Functionally, component of the tagatose-1,6-bisphosphate aldolase KbaYZ that is required for full activity and stability of the Y subunit. Could have a chaperone-like function for the proper and stable folding of KbaY. When expressed alone, KbaZ does not show any aldolase activity. The polypeptide is D-tagatose-1,6-bisphosphate aldolase subunit KbaZ (Escherichia coli O17:K52:H18 (strain UMN026 / ExPEC)).